The following is a 357-amino-acid chain: Protein pelota homolog (357 aa).

This sequence belongs to the eukaryotic release factor 1 family. Pelota subfamily. As to quaternary structure, monomer. A divalent metal cation is required as a cofactor.

The protein localises to the cytoplasm. May function in recognizing stalled ribosomes, interact with stem-loop structures in stalled mRNA molecules, and effect endonucleolytic cleavage of the mRNA. May play a role in the release non-functional ribosomes and degradation of damaged mRNAs. Has endoribonuclease activity. The sequence is that of Protein pelota homolog from Halobacterium salinarum (strain ATCC 29341 / DSM 671 / R1).